Here is a 229-residue protein sequence, read N- to C-terminus: Probable transmembrane reductase CYB561D1 (229 aa).

At 1–24 (MQPLEVGLVPAPAGEPRLTRWLRR) the chain is on the cytoplasmic side. One can recognise a Cytochrome b561 domain in the interval 22–224 (LRRGSGILAH…HQISRSYLPR (203 aa)). The chain crosses the membrane as a helical span at residues 25–45 (GSGILAHLVALGFTIFLTALS). Residues 46-53 (RPGTSLFS) lie on the Lumenal side of the membrane. Residues 54–74 (WHPVFMALAFCLCMAEAILLF) form a helical membrane-spanning segment. H55 contacts heme b. Residues 75–91 (SPEHSLFFFCSRKARIR) are Cytoplasmic-facing. Residues 92 to 112 (LHWAGQTLAILCAALGLGFII) form a helical membrane-spanning segment. Heme b contacts are provided by H93 and H127. Residues 113-128 (SSRTRSELPHLVSWHS) are Lumenal-facing. A helical membrane pass occupies residues 129-149 (WVGALTLLATAVQALCGLCLL). The Cytoplasmic segment spans residues 150–169 (CPRAARVSRVARLKLYHLTC). H166 lines the heme b pocket. Residues 170–190 (GLVVYLMATVTVLLGMYSVWF) traverse the membrane as a helical segment. The Lumenal segment spans residues 191–193 (QAQ). Residues 194 to 214 (IKGAAWYLCLALPVYPALVIM) traverse the membrane as a helical segment. Residues 215–229 (HQISRSYLPRKKMEM) are Cytoplasmic-facing.

Heme b serves as cofactor.

It is found in the membrane. It catalyses the reaction monodehydro-L-ascorbate radical(out) + L-ascorbate(in) = monodehydro-L-ascorbate radical(in) + L-ascorbate(out). The enzyme catalyses Fe(3+)(out) + L-ascorbate(in) = monodehydro-L-ascorbate radical(in) + Fe(2+)(out) + H(+). Functionally, probable transmembrane reductase that may use ascorbate as an electron donor and transfer electrons across membranes to reduce monodehydro-L-ascorbate radical and iron cations Fe(3+) in another cellular compartment. This is Probable transmembrane reductase CYB561D1 from Homo sapiens (Human).